Reading from the N-terminus, the 904-residue chain is Patched domain-containing protein 4 (904 aa).

Residues 41 to 61 (HPVFFLTVPAVLTITFGLSAL) form a helical membrane-spanning segment. Residue Asn149 is glycosylated (N-linked (GlcNAc...) asparagine). Residues 291–450 (TRSKVLVSLV…FSFFGSCLVF (160 aa)) enclose the SSD domain. The next 6 helical transmembrane spans lie at 295–312 (VLVS…SSSM), 323–343 (GLLG…IFFI), 351–371 (TLLG…FELL), 394–414 (VMVT…MGAS), 431–451 (VSIL…LVFA), and 523–543 (PFVV…CLQI). The N-linked (GlcNAc...) asparagine glycan is linked to Asn625. A run of 3 helical transmembrane segments spans residues 718 to 738 (PVLI…FLVI), 744 to 764 (FWLI…MTLW), and 771 to 791 (ISIL…APLL). N-linked (GlcNAc...) asparagine glycosylation is present at Asn820. A run of 2 helical transmembrane segments spans residues 823-843 (SFLI…FTLF) and 845-865 (CLLL…PVFL).

This sequence belongs to the patched family.

It is found in the membrane. Its function is as follows. Could act as a repressor of canonical hedgehog signaling by antagonizing the effects of SMO, as suggested by down-regulation of hedgehog target genes, including GLI1, PTCH1, and PTCH2 in PTCHD4-expressing cells. The sequence is that of Patched domain-containing protein 4 (Ptchd4) from Mus musculus (Mouse).